The following is a 265-amino-acid chain: (-)-isopiperitenol/(-)-carveol dehydrogenase, mitochondrial (265 aa).

A mitochondrion-targeting transit peptide spans 1–30; that stretch reads MASVKKLAGKVAIVTGGASGIGEVTARLFA. 13-38 provides a ligand contact to NAD(+); it reads IVTGGASGIGEVTARLFAERGARAVV. Position 147 (serine 147) interacts with substrate. Residue tyrosine 160 is the Proton acceptor of the active site.

This sequence belongs to the short-chain dehydrogenases/reductases (SDR) family. In terms of assembly, homodimer and homotetramer. In terms of tissue distribution, peltate glandular trichomes.

It is found in the mitochondrion. It catalyses the reaction (1S,6R)-isopiperitenol + NAD(+) = (6R)-isopiperitenone + NADH + H(+). It carries out the reaction (1S,5R)-carveol + NADP(+) = (R)-carvone + NADPH + H(+). Functionally, involved in the biosynthesis of menthol and related monoterpenes in leaves. Can use (-)-trans-carveol and, with a lower relative velocity, (-)-trans-isopiperitenol, (+)-neomenthol, (+)-neoisomenthol and (-)-cis-isopiperitenol as substrates, but not (-)-cis-carvenol, (-)-menthol, (+)-isomenthol, 7-hydroxy-limonene, (-)-isopiperitenone or (-)-carvone. This is (-)-isopiperitenol/(-)-carveol dehydrogenase, mitochondrial from Mentha piperita (Peppermint).